We begin with the raw amino-acid sequence, 155 residues long: MSKITEQVEVIVKPIMEDLNFELVDVEYVKEGRDHFLRISIDKEGGVDLNDCTLASEKISEAMDANDPIPEMYYLDVASPGAERPIKKEQDFQNAITKPVFVSLYVPIEGEKEWLGILQEVNNETIVVQVKIKARTKDIEIPRDKIAKARHAVMI.

This sequence belongs to the RimP family.

The protein localises to the cytoplasm. Its function is as follows. Required for maturation of 30S ribosomal subunits. The polypeptide is Ribosome maturation factor RimP (Staphylococcus aureus (strain bovine RF122 / ET3-1)).